The primary structure comprises 447 residues: Ribosomal protein uS12 methylthiotransferase RimO (447 aa).

Residues 15 to 125 (PRVGFVSLGC…VMQAIHRHLP (111 aa)) form the MTTase N-terminal domain. [4Fe-4S] cluster is bound by residues Cys24, Cys60, Cys89, Cys156, Cys160, and Cys163. The Radical SAM core domain maps to 142-379 (LTPKHYAYLK…MQWQEEISKK (238 aa)). Residues 379–447 (KRLAGKKGRI…GIHDLWAKKI (69 aa)) form the TRAM domain.

Belongs to the methylthiotransferase family. RimO subfamily. The cofactor is [4Fe-4S] cluster.

The protein resides in the cytoplasm. The catalysed reaction is L-aspartate(89)-[ribosomal protein uS12]-hydrogen + (sulfur carrier)-SH + AH2 + 2 S-adenosyl-L-methionine = 3-methylsulfanyl-L-aspartate(89)-[ribosomal protein uS12]-hydrogen + (sulfur carrier)-H + 5'-deoxyadenosine + L-methionine + A + S-adenosyl-L-homocysteine + 2 H(+). Its function is as follows. Catalyzes the methylthiolation of an aspartic acid residue of ribosomal protein uS12. The chain is Ribosomal protein uS12 methylthiotransferase RimO from Nitrosomonas europaea (strain ATCC 19718 / CIP 103999 / KCTC 2705 / NBRC 14298).